Consider the following 100-residue polypeptide: uncharacterized protein (100 aa).

This is an uncharacterized protein from Acidianus convivator (ATV).